Reading from the N-terminus, the 312-residue chain is tRNA pseudouridine synthase B (312 aa).

D38 acts as the Nucleophile in catalysis.

The protein belongs to the pseudouridine synthase TruB family. Type 1 subfamily.

The catalysed reaction is uridine(55) in tRNA = pseudouridine(55) in tRNA. Functionally, responsible for synthesis of pseudouridine from uracil-55 in the psi GC loop of transfer RNAs. This chain is tRNA pseudouridine synthase B, found in Syntrophus aciditrophicus (strain SB).